The primary structure comprises 388 residues: Alcohol dehydrogenase-like 1 (388 aa).

Cys53, Thr55, His76, Cys106, Cys109, Cys112, Cys120, and Cys185 together coordinate Zn(2+). Residues Thr55 and His76 each contribute to the an alcohol site. Residue Thr55 participates in NAD(+) binding. Residues 210-215, Asp234, Lys239, 304-306, Phe331, and Arg381 each bind NAD(+); these read GLGAVG and LGM.

It belongs to the zinc-containing alcohol dehydrogenase family. Class-III subfamily. In terms of assembly, homodimer. Requires Zn(2+) as cofactor.

The protein localises to the cytoplasm. The catalysed reaction is a primary alcohol + NAD(+) = an aldehyde + NADH + H(+). It catalyses the reaction a secondary alcohol + NAD(+) = a ketone + NADH + H(+). The chain is Alcohol dehydrogenase-like 1 from Arabidopsis thaliana (Mouse-ear cress).